Here is a 600-residue protein sequence, read N- to C-terminus: Pescadillo homolog (600 aa).

The region spanning 351 to 450 (PTSTLLSKFI…ELLPVSQYAP (100 aa)) is the BRCT domain. The segment at 454–600 (LPPHLSPWGD…AELGKLNKKN (147 aa)) is disordered. Positions 478 to 509 (QGEEEEEEEEEIEGDEIEEDVEEEDEEEDEDL) are enriched in acidic residues. Residues 478 to 600 (QGEEEEEEEE…AELGKLNKKN (123 aa)) are a coiled coil. Residues 530–539 (KDKKSSKGKK) show a composition bias toward basic residues. Composition is skewed to basic and acidic residues over residues 569 to 580 (IDKKEARQDDLT) and 588 to 600 (KTKA…NKKN).

The protein belongs to the pescadillo family. As to quaternary structure, component of the NOP7 complex, composed of ERB1, NOP7 and YTM1. The complex is held together by ERB1, which interacts with NOP7 via its N-terminal domain and with YTM1 via a high-affinity interaction between the seven-bladed beta-propeller domains of the 2 proteins. The NOP7 complex associates with the 66S pre-ribosome.

It is found in the nucleus. It localises to the nucleolus. The protein localises to the nucleoplasm. Functionally, component of the NOP7 complex, which is required for maturation of the 25S and 5.8S ribosomal RNAs and formation of the 60S ribosome. The sequence is that of Pescadillo homolog from Debaryomyces hansenii (strain ATCC 36239 / CBS 767 / BCRC 21394 / JCM 1990 / NBRC 0083 / IGC 2968) (Yeast).